A 231-amino-acid chain; its full sequence is Somatolactin (231 aa).

An N-terminal signal peptide occupies residues 1 to 24 (MLMFTAIQRGVWVALLWPHLLTAS). Disulfide bonds link Cys-29/Cys-39, Cys-89/Cys-205, and Cys-222/Cys-230. 2 N-linked (GlcNAc...) asparagine glycosylation sites follow: Asn-35 and Asn-145.

Belongs to the somatotropin/prolactin family. As to expression, pituitary gland.

It is found in the secreted. In Siganus guttatus (Orange-spotted spinefoot), this protein is Somatolactin.